Consider the following 59-residue polypeptide: MDVKRVKQILSSSNRIDVTYEGVPVWIESCDEQSGVAQVYDVSNPGESVHVNVTALEEK.

It belongs to the SspH family.

The protein resides in the spore core. The sequence is that of Small, acid-soluble spore protein H from Bacillus cereus (strain ZK / E33L).